Reading from the N-terminus, the 271-residue chain is DNA repair protein RecO (271 aa).

Positions 248–271 (AVGVEDSVRQDGDRDSTTRTPSSA) are disordered. The span at 253 to 264 (DSVRQDGDRDST) shows a compositional bias: basic and acidic residues.

The protein belongs to the RecO family.

Functionally, involved in DNA repair and RecF pathway recombination. The polypeptide is DNA repair protein RecO (Rhodococcus opacus (strain B4)).